The sequence spans 348 residues: NADH-ubiquinone oxidoreductase chain 2 (348 aa).

The next 9 helical transmembrane spans lie at 13-33 (VGLG…WMGL), 60-80 (FLTQ…NAWM), 93-113 (IAST…PMHF), 149-169 (IDPL…GWGG), 178-197 (ILAY…IQYA), 202-219 (LIAL…FLTL), 246-266 (LVLL…KWLI), 274-294 (DLPI…YFYL), and 326-346 (LALF…ILML).

This sequence belongs to the complex I subunit 2 family.

The protein localises to the mitochondrion inner membrane. The catalysed reaction is a ubiquinone + NADH + 5 H(+)(in) = a ubiquinol + NAD(+) + 4 H(+)(out). Its function is as follows. Core subunit of the mitochondrial membrane respiratory chain NADH dehydrogenase (Complex I) that is believed to belong to the minimal assembly required for catalysis. Complex I functions in the transfer of electrons from NADH to the respiratory chain. The immediate electron acceptor for the enzyme is believed to be ubiquinone. The polypeptide is NADH-ubiquinone oxidoreductase chain 2 (MT-ND2) (Cyprinus carpio (Common carp)).